Here is a 315-residue protein sequence, read N- to C-terminus: Large ribosomal subunit protein uL10 (315 aa).

A compositionally biased stretch (low complexity) spans 285 to 294 (AAAPAASAAP). The disordered stretch occupies residues 285–315 (AAAPAASAAPAKEEKEESEESDDDMGFGLFD). The segment covering 300-309 (EESEESDDDM) has biased composition (acidic residues).

It belongs to the universal ribosomal protein uL10 family. P0 forms a pentameric complex by interaction with dimers of P1 and P2. Phosphorylated.

Ribosomal protein P0 is the functional equivalent of E.coli protein L10. This Lithobates sylvaticus (Wood frog) protein is Large ribosomal subunit protein uL10 (RPLP0).